A 387-amino-acid polypeptide reads, in one-letter code: GDP-mannose transporter (387 aa).

Residues 1–25 are compositionally biased toward basic and acidic residues; sequence MADTKKNDNYAIDMDKLDAESDRFR. Topologically, residues 1 to 42 are cytoplasmic; it reads MADTKKNDNYAIDMDKLDAESDRFRPPPQPQPRHSSSSHSQS. The segment at 1 to 45 is disordered; sequence MADTKKNDNYAIDMDKLDAESDRFRPPPQPQPRHSSSSHSQSISN. The span at 32-45 shows a compositional bias: low complexity; sequence PRHSSSSHSQSISN. A helical membrane pass occupies residues 43 to 63; sequence ISNSPVLPILSYCASSILMTV. Over 64–71 the chain is Lumenal; it reads TNKYVLSG. The chain crosses the membrane as a helical span at residues 72-92; that stretch reads VQFNLNFFLLCVQSVVCIIAI. The Cytoplasmic portion of the chain corresponds to 93-112; the sequence is QTCKSMGLINYRDFNSDEAK. The chain crosses the membrane as a helical span at residues 113 to 129; that stretch reads KWFPISLLLIGMIYTGT. At 130 to 136 the chain is on the lumenal side; that stretch reads KALKFLS. A helical transmembrane segment spans residues 137-153; that stretch reads IPVYTIFKNLTIILIAY. Topologically, residues 154 to 162 are cytoplasmic; that stretch reads GEVLWFGGS. Residues 163-184 traverse the membrane as a helical segment; the sequence is VTGMALFSFGLMVLSSVIAAWA. The Lumenal portion of the chain corresponds to 185–206; that stretch reads DIKHALDTSGFSGAEATSKIST. A helical membrane pass occupies residues 207 to 227; the sequence is LNAGYIWMLINCLCTSTYILG. Residues 228 to 241 lie on the Cytoplasmic side of the membrane; it reads MRKRIKLTNFKDFD. The chain crosses the membrane as a helical span at residues 242-262; the sequence is TMFYNNLLSIPILMIGSFIVE. The Lumenal portion of the chain corresponds to 263–280; it reads DWSSENINKNFPIETRNS. A helical membrane pass occupies residues 281–301; the sequence is LIFAMIFSGLSSVFISYTSAW. At 302-309 the chain is on the cytoplasmic side; that stretch reads CVRVTSST. Residues 310-329 traverse the membrane as a helical segment; it reads TYSMVGALNKLPIALSGLIF. The Lumenal portion of the chain corresponds to 330-332; the sequence is FGD. Residues 333–355 form a helical membrane-spanning segment; sequence PVTVPSVSAIVVGFISGIVYSLA. At 356-387 the chain is on the cytoplasmic side; that stretch reads KVKQNAKPRTGVLPTTNPVSASTQSMRDGLKS. Residues 366–387 form a disordered region; the sequence is GVLPTTNPVSASTQSMRDGLKS. The segment covering 368–381 has biased composition (polar residues); that stretch reads LPTTNPVSASTQSM.

The protein belongs to the TPT transporter family. SLC35D subfamily. In terms of assembly, homooligomer.

It localises to the golgi apparatus membrane. It is found in the cytoplasmic vesicle membrane. Its subcellular location is the endoplasmic reticulum membrane. Functionally, involved in the import of GDP-mannose from the cytoplasm into the Golgi lumen. In Coccidioides immitis (strain RS) (Valley fever fungus), this protein is GDP-mannose transporter (VRG4).